A 599-amino-acid polypeptide reads, in one-letter code: Elongation factor 4 (599 aa).

Residues 5–187 (SHIRNFSIIA…ALVNGIPAPV (183 aa)) enclose the tr-type G domain. Residues 17–22 (DHGKST) and 134–137 (NKMD) each bind GTP.

This sequence belongs to the TRAFAC class translation factor GTPase superfamily. Classic translation factor GTPase family. LepA subfamily.

The protein resides in the cell inner membrane. It catalyses the reaction GTP + H2O = GDP + phosphate + H(+). Its function is as follows. Required for accurate and efficient protein synthesis under certain stress conditions. May act as a fidelity factor of the translation reaction, by catalyzing a one-codon backward translocation of tRNAs on improperly translocated ribosomes. Back-translocation proceeds from a post-translocation (POST) complex to a pre-translocation (PRE) complex, thus giving elongation factor G a second chance to translocate the tRNAs correctly. Binds to ribosomes in a GTP-dependent manner. The polypeptide is Elongation factor 4 (Teredinibacter turnerae (strain ATCC 39867 / T7901)).